We begin with the raw amino-acid sequence, 382 residues long: Gap junction alpha-1 protein (382 aa).

Topologically, residues 2 to 23 (GDWSALGKLLDKVQAYSTAGGK) are cytoplasmic. Position 5 is a phosphoserine (S5). A helical membrane pass occupies residues 24–44 (VWLSVLFIFRILLLGTAVESA). At 45 to 76 (WGDEQSAFRCNTQQPGCENVCYDKSFPISHVR) the chain is on the extracellular side. 2 disulfides stabilise this stretch: C54–C192 and C187–C198. A helical membrane pass occupies residues 77–97 (FWVLQIIFVSVPTLLYLAHVF). Topologically, residues 98–155 (YVMRKEEKLNKKEEELKVAQTDGVNVEMHLKQIEIKKFKYGIEEHGKVKMRGGLLRTY) are cytoplasmic. K144 participates in a covalent cross-link: Glycyl lysine isopeptide (Lys-Gly) (interchain with G-Cter in SUMO). A helical transmembrane segment spans residues 156–176 (IISILFKSIFEVAFLLIQWYI). Over 177-207 (YGFSLSAVYTCKRDPCPHQVDCFLSRPTEKT) the chain is Extracellular. A helical membrane pass occupies residues 208-228 (IFIIFMLVVSLVSLALNIIEL). The Cytoplasmic portion of the chain corresponds to 229–382 (FYVFFKGVKD…SRPRPDDLEI (154 aa)). Residue K237 forms a Glycyl lysine isopeptide (Lys-Gly) (interchain with G-Cter in SUMO) linkage. The interaction with NOV stretch occupies residues 244–382 (SDPYHTTSGA…SRPRPDDLEI (139 aa)). Y247 is modified (phosphotyrosine). A phosphoserine mark is found at S255 and S262. The interaction with UBQLN4 stretch occupies residues 264–382 (KYAYFNGCSS…SRPRPDDLEI (119 aa)). C271 bears the S-nitrosocysteine mark. Phosphothreonine is present on T275. Phosphoserine is present on residues S306 and S314. Residues 317 to 332 (QNRMGQAGSTISNSHA) show a composition bias toward polar residues. The interval 317-382 (QNRMGQAGST…SRPRPDDLEI (66 aa)) is disordered. S325 carries the post-translational modification Phosphoserine; by CK1. The residue at position 326 (T326) is a Phosphothreonine. Phosphoserine; by CK1 is present on residues S328 and S330. Residues S344 and S365 each carry the phosphoserine modification. A compositionally biased stretch (low complexity) spans 362–374 (RPSSRASSRASSR). S368 carries the phosphoserine; by PKC/PRKCG and PKC/PRKCD modification. A phosphoserine mark is found at S369 and S373.

Belongs to the connexin family. Alpha-type (group II) subfamily. In terms of assembly, a connexon is composed of a hexamer of connexins. Interacts with SGSM3. Interacts with RIC1/CIP150. Interacts with CNST and CSNK1D. Interacts (via C-terminus) with TJP1. Interacts (via C-terminus) with SRC (via SH3 domain). Interacts (not ubiquitinated) with UBQLN4 (via UBA domain). Interacts with NOV. Interacts with TMEM65. Interacts with ANK3/ANKG and PKP2. In terms of processing, phosphorylation at Ser-325, Ser-328 and Ser-330 by CK1 modulates gap junction assembly. Phosphorylated at Ser-368 by PRKCG; phosphorylation induces disassembly of gap junction plaques and inhibition of gap junction activity. Phosphorylation at Ser-368 by PRKCD triggers its internalization into small vesicles leading to proteasome-mediated degradation. Sumoylated with SUMO1, SUMO2 and SUMO3, which may regulate the level of functional Cx43 gap junctions at the plasma membrane. May be desumoylated by SENP1 or SENP2. Post-translationally, S-nitrosylation at Cys-271 is enriched at the muscle endothelial gap junction in arteries, it augments channel permeability and may regulate of smooth muscle cell to endothelial cell communication. In terms of processing, acetylated in the developing cortex; leading to delocalization from the cell membrane.

It localises to the cell membrane. The protein resides in the cell junction. Its subcellular location is the gap junction. The protein localises to the endoplasmic reticulum. Its function is as follows. Gap junction protein that acts as a regulator of bladder capacity. A gap junction consists of a cluster of closely packed pairs of transmembrane channels, the connexons, through which materials of low MW diffuse from one cell to a neighboring cell. May play a critical role in the physiology of hearing by participating in the recycling of potassium to the cochlear endolymph. Negative regulator of bladder functional capacity: acts by enhancing intercellular electrical and chemical transmission, thus sensitizing bladder muscles to cholinergic neural stimuli and causing them to contract. May play a role in cell growth inhibition through the regulation of NOV expression and localization. Plays an essential role in gap junction communication in the ventricles. The sequence is that of Gap junction alpha-1 protein (GJA1) from Chlorocebus aethiops (Green monkey).